Here is a 235-residue protein sequence, read N- to C-terminus: Large ribosomal subunit protein uL3 (235 aa).

The segment at 150 to 189 is disordered; that stretch reads AGGPASHGSGHHRHAGSTGMRSTPGRGLPGGKKAGQMGNE.

The protein belongs to the universal ribosomal protein uL3 family. In terms of assembly, part of the 50S ribosomal subunit. Forms a cluster with proteins L14 and L19.

Functionally, one of the primary rRNA binding proteins, it binds directly near the 3'-end of the 23S rRNA, where it nucleates assembly of the 50S subunit. This is Large ribosomal subunit protein uL3 from Protochlamydia amoebophila (strain UWE25).